Here is a 334-residue protein sequence, read N- to C-terminus: Fructose-1,6-bisphosphatase class 1 (334 aa).

Mg(2+) is bound by residues Glu89, Asp112, Leu114, and Asp115. Residues 115–118, Asn208, Tyr241, 259–261, and Lys271 contribute to the substrate site; these read DGSS and YLY. Position 277 (Glu277) interacts with Mg(2+).

The protein belongs to the FBPase class 1 family. As to quaternary structure, homotetramer. The cofactor is Mg(2+).

The protein resides in the cytoplasm. The catalysed reaction is beta-D-fructose 1,6-bisphosphate + H2O = beta-D-fructose 6-phosphate + phosphate. The protein operates within carbohydrate biosynthesis; gluconeogenesis. The polypeptide is Fructose-1,6-bisphosphatase class 1 (Pectobacterium atrosepticum (strain SCRI 1043 / ATCC BAA-672) (Erwinia carotovora subsp. atroseptica)).